The chain runs to 499 residues: Cytochrome P450 705A12 (499 aa).

Residues L4–L24 form a helical membrane-spanning segment. Heme is bound at residue C439.

This sequence belongs to the cytochrome P450 family. Requires heme as cofactor.

It is found in the membrane. Functionally, may be involved in hydroxylation of the triterpene marneral. This is Cytochrome P450 705A12 from Arabidopsis thaliana (Mouse-ear cress).